The primary structure comprises 371 residues: MSMSPKHTTPFSVSDILSPLEESYKKVGMEGGGLGAPLAAYRQGQAAPPTAAMQQHAVGHHGAVTAAYHMTAAGVPQLSHSAVGGYCNGNLGNMSELPPYQDTMRNSASGPGWYGANPDPRFPAISRFMGPASGMNMSGMGGLGSLGDVSKNMAPLPSAPRRKRRVLFSQAQVYELERRFKQQKYLSAPEREHLASMIHLTPTQVKIWFQNHRYKMKRQAKDKAAQQQLQQDSGGGGGGGGTGCPQQQQAQQQSPRRVAVPVLVKDGKPCQAGAPAPGAASLQGHAQQQAQHQAQAAQAAAAAISVGSGGAGLGAHPGHQPGSAGQSPDLAHHAASPAALQGQVSSLSHLNSSGSDYGTMSCSTLLYGRTW.

The segment at residues 161-220 is a DNA-binding region (homeobox); that stretch reads RRKRRVLFSQAQVYELERRFKQQKYLSAPEREHLASMIHLTPTQVKIWFQNHRYKMKRQA. Disordered regions lie at residues 219-294 and 310-339; these read QAKD…QHQA and GAGLGAHPGHQPGSAGQSPDLAHHAASPAA. Gly residues predominate over residues 233 to 243; that stretch reads SGGGGGGGGTG. A compositionally biased stretch (low complexity) spans 244-253; the sequence is CPQQQQAQQQ. Residue S254 is modified to Phosphoserine. A compositionally biased stretch (low complexity) spans 272–294; the sequence is AGAPAPGAASLQGHAQQQAQHQA.

It belongs to the NK-2 homeobox family. Interacts with WWTR1. In terms of processing, phosphorylated on serine residues by STK3/MST2. Thyroid and lung.

The protein localises to the nucleus. Its function is as follows. Transcription factor that binds and activates the promoter of thyroid specific genes such as thyroglobulin, thyroperoxidase, and thyrotropin receptor. Crucial in the maintenance of the thyroid differentiation phenotype. May play a role in lung development and surfactant homeostasis. Forms a regulatory loop with GRHL2 that coordinates lung epithelial cell morphogenesis and differentiation. Activates the transcription of GNRHR and plays a role in enhancing the circadian oscillation of its gene expression. Represses the transcription of the circadian transcriptional repressor NR1D1. In Homo sapiens (Human), this protein is Homeobox protein Nkx-2.1.